Consider the following 500-residue polypeptide: Ribose import ATP-binding protein RbsA (500 aa).

2 consecutive ABC transporter domains span residues 6–242 (LALS…VGRK) and 252–495 (AQQG…VGRN). 38–45 (GENGAGKS) serves as a coordination point for ATP.

Belongs to the ABC transporter superfamily. Ribose importer (TC 3.A.1.2.1) family. In terms of assembly, the complex is composed of an ATP-binding protein (RbsA), two transmembrane proteins (RbsC) and a solute-binding protein (RbsB).

The protein resides in the cell inner membrane. The catalysed reaction is D-ribose(out) + ATP + H2O = D-ribose(in) + ADP + phosphate + H(+). Functionally, part of the ABC transporter complex RbsABC involved in ribose import. Responsible for energy coupling to the transport system. This is Ribose import ATP-binding protein RbsA from Vibrio cholerae serotype O1 (strain ATCC 39315 / El Tor Inaba N16961).